Consider the following 435-residue polypeptide: Mitochondrial association factor 1 form a1 (435 aa).

A signal peptide spans 1 to 20 (MWRIWRCRLSFLFATGCLLG). The Vacuolar portion of the chain corresponds to 21-96 (ALTAGLGSQM…VTARRRRNRR (76 aa)). A helical transmembrane segment spans residues 97 to 117 (IALIATAVGVAVILAALYVLR). Topologically, residues 118 to 435 (RRRAQPPQEP…ERTYTFPQGD (318 aa)) are cytoplasmic. Residues 120 to 159 (RAQPPQEPEPPTRLRTPRPRAPSGQQQPSESEPPAGVPMT) form a disordered region.

Interacts with host SAMM50.

The protein localises to the parasitophorous vacuole membrane. Its function is as follows. During host cell infection by tachyzoites, does not play a role in tethering the parasitophorous vacuole to the host mitochondria, probably because it does not bind host mitochondrial import protein TOMM70. The chain is Mitochondrial association factor 1 form a1 from Toxoplasma gondii (strain ATCC 50611 / Me49).